The following is a 780-amino-acid chain: Tricorn protease-interacting factor F3 (780 aa).

Substrate-binding positions include glutamate 101 and 230–234; that span reads GAMEN. Histidine 265 contacts Zn(2+). Glutamate 266 acts as the Proton acceptor in catalysis. Residues histidine 269 and glutamate 288 each coordinate Zn(2+).

It belongs to the peptidase M1 family. In terms of assembly, part of the tricorn proteolytic complex. Zn(2+) is required as a cofactor.

Its subcellular location is the cytoplasm. In terms of biological role, proteases F1, F2 and F3 degrade oligopeptides produced by Tricorn (themselves probably produced by the proteasome), yielding free amino acids. The sequence is that of Tricorn protease-interacting factor F3 (trf3) from Thermoplasma acidophilum (strain ATCC 25905 / DSM 1728 / JCM 9062 / NBRC 15155 / AMRC-C165).